Consider the following 272-residue polypeptide: Flagellin (272 aa).

The protein belongs to the bacterial flagellin family.

The protein localises to the secreted. It localises to the bacterial flagellum. In terms of biological role, flagellin is the subunit protein which polymerizes to form the filaments of bacterial flagella. This is Flagellin (hag) from Halalkalibacterium halodurans (strain ATCC BAA-125 / DSM 18197 / FERM 7344 / JCM 9153 / C-125) (Bacillus halodurans).